Reading from the N-terminus, the 460-residue chain is ATP synthase subunit beta (460 aa).

ATP is bound at residue 148–155 (GGAGVGKT).

It belongs to the ATPase alpha/beta chains family. In terms of assembly, F-type ATPases have 2 components, CF(1) - the catalytic core - and CF(0) - the membrane proton channel. CF(1) has five subunits: alpha(3), beta(3), gamma(1), delta(1), epsilon(1). CF(0) has three main subunits: a(1), b(2) and c(9-12). The alpha and beta chains form an alternating ring which encloses part of the gamma chain. CF(1) is attached to CF(0) by a central stalk formed by the gamma and epsilon chains, while a peripheral stalk is formed by the delta and b chains.

Its subcellular location is the cell inner membrane. It catalyses the reaction ATP + H2O + 4 H(+)(in) = ADP + phosphate + 5 H(+)(out). Its function is as follows. Produces ATP from ADP in the presence of a proton gradient across the membrane. The catalytic sites are hosted primarily by the beta subunits. The sequence is that of ATP synthase subunit beta from Alcanivorax borkumensis (strain ATCC 700651 / DSM 11573 / NCIMB 13689 / SK2).